The primary structure comprises 638 residues: Chaperone protein DnaK (638 aa).

Position 198 is a phosphothreonine; by autocatalysis (T198). Disordered regions lie at residues 539–559 (DGLAHSTKKQVEEAGDALASD) and 602–638 (QAKAQGEAEGQAHDAGQEKPADDVVDAEFEEVKDDKK). The segment covering 611–623 (GQAHDAGQEKPAD) has biased composition (basic and acidic residues). The segment covering 624–638 (DVVDAEFEEVKDDKK) has biased composition (acidic residues).

This sequence belongs to the heat shock protein 70 family.

Acts as a chaperone. In Shewanella frigidimarina (strain NCIMB 400), this protein is Chaperone protein DnaK.